The primary structure comprises 470 residues: Solute carrier family 7 member 13 (470 aa).

The Cytoplasmic segment spans residues 1–11 (MDRGEKIQLKR). Residues 12–32 (VFGYWWGTSFLLINIIGAGIF) form a helical membrane-spanning segment. Topologically, residues 33–45 (VSPKGVLAYSCMN) are extracellular. A helical membrane pass occupies residues 46-66 (VGVSLCVWAGCAILAMTSTLC). Topologically, residues 67-87 (SAEISISFPCSGAQYYFLKRY) are cytoplasmic. A helical transmembrane segment spans residues 88–108 (FGSTVAFLNLWTSLFLGSGVV). Residues 109–128 (AGQALLLAEYSIQPFFPSCS) lie on the Extracellular side of the membrane. A helical membrane pass occupies residues 129–149 (VPKLPKKCLALAMLWIVGILT). The Cytoplasmic portion of the chain corresponds to 150–162 (SRGVKEVTWLQIA). Residues 163–183 (SSVLKVSILSFISLTGVVFLI) form a helical membrane-spanning segment. At 184–206 (RGKKENVERFQNAFDAELPDISH) the chain is on the extracellular side. A helical transmembrane segment spans residues 207 to 227 (LIQAIFQGYFAYSGGACFTLI). Over 228-240 (AGELKKPRTTIPK) the chain is Cytoplasmic. A helical transmembrane segment spans residues 241–261 (CIFTALPLVTVVYLLVNISYL). Over 262 to 287 (TVLTPREILSSDAVAITWADRAFPSL) the chain is Extracellular. Residues 288–308 (AWIMPFAISTSLFSNLLISIF) form a helical membrane-spanning segment. Residues 309 to 336 (KSSRPIYLASQEGQLPLLFNTLNSHSSP) lie on the Cytoplasmic side of the membrane. A helical membrane pass occupies residues 337 to 357 (FTAVLLLVTLGSLAIILTSLI). A topological domain (extracellular) is located at residue Asp358. The helical transmembrane segment at 359 to 379 (LINYIFFTGSLWSILLMIGIL) threads the bilayer. The Cytoplasmic segment spans residues 380–393 (RRRYQEPNLSIPYK). A helical transmembrane segment spans residues 394 to 414 (VFLSFPLATIVIDVGLVVIPL). Residues 415 to 421 (VKSPNVH) lie on the Extracellular side of the membrane. Residues 422-442 (YVYVLLLVLSGLLFYIPLIHF) form a helical membrane-spanning segment. Residues 443–470 (KIRLAWFEKMTCYLQLLFNICLPDVSEE) are Cytoplasmic-facing.

Belongs to the amino acid-polyamine-organocation (APC) superfamily. In terms of assembly, disulfide-linked heterodimer composed of the catalytic light subunit SLC7A13 and the heavy subunit SLC3A1. Expressed in the kidney.

It localises to the apical cell membrane. The catalysed reaction is L-cystine(out) + L-aspartate(in) = L-cystine(in) + L-aspartate(out). It carries out the reaction L-cystine(out) = L-cystine(in). It catalyses the reaction L-aspartate(in) + L-glutamate(out) = L-aspartate(out) + L-glutamate(in). The enzyme catalyses L-aspartate(in) + L-glutamine(out) = L-aspartate(out) + L-glutamine(in). The catalysed reaction is L-aspartate(in) + L-methionine(out) = L-aspartate(out) + L-methionine(in). It carries out the reaction L-leucine(out) + L-aspartate(in) = L-leucine(in) + L-aspartate(out). It catalyses the reaction L-valine(out) + L-aspartate(in) = L-valine(in) + L-aspartate(out). The enzyme catalyses L-aspartate(in) + L-phenylalanine(out) = L-aspartate(out) + L-phenylalanine(in). The catalysed reaction is L-tyrosine(out) + L-aspartate(in) = L-tyrosine(in) + L-aspartate(out). It carries out the reaction L-tryptophan(out) + L-aspartate(in) = L-tryptophan(in) + L-aspartate(out). In terms of biological role, associates with SLC3A1/rBAT to form a functional heterodimeric complex that transports anionic and neutral amino acids across the apical plasma membrane of renal epithelium. Preferentially mediates exchange transport, but can also operate via facilitated diffusion. May act as a major transporter for L-cystine in late proximal tubules, ensuring its reabsorption from the luminal fluid in exchange for cytosolic L-glutamate or L-aspartate. This Homo sapiens (Human) protein is Solute carrier family 7 member 13 (SLC7A13).